The primary structure comprises 345 residues: Fe(3+) ions import ATP-binding protein FbpC (345 aa).

The ABC transporter domain occupies 3 to 233; the sequence is LSLKAATVRF…PADEFVARFL (231 aa). 35–42 contacts ATP; that stretch reads GPSGSGKS.

Belongs to the ABC transporter superfamily. Fe(3+) ion importer (TC 3.A.1.10) family. As to quaternary structure, the complex is composed of two ATP-binding proteins (FbpC), two transmembrane proteins (FbpB) and a solute-binding protein (FbpA).

The protein localises to the cell membrane. It carries out the reaction Fe(3+)(out) + ATP + H2O = Fe(3+)(in) + ADP + phosphate + H(+). In terms of biological role, part of the ABC transporter complex FbpABC involved in Fe(3+) ions import. Responsible for energy coupling to the transport system. The polypeptide is Fe(3+) ions import ATP-binding protein FbpC (Streptomyces avermitilis (strain ATCC 31267 / DSM 46492 / JCM 5070 / NBRC 14893 / NCIMB 12804 / NRRL 8165 / MA-4680)).